A 358-amino-acid polypeptide reads, in one-letter code: Aromatic amino acid aminotransferase (358 aa).

Lys222 carries the N6-(pyridoxal phosphate)lysine modification.

This sequence belongs to the class-II pyridoxal-phosphate-dependent aminotransferase family. In terms of assembly, homodimer. It depends on pyridoxal 5'-phosphate as a cofactor.

The enzyme catalyses an aromatic L-alpha-amino acid + 2-oxoglutarate = an aromatic oxo-acid + L-glutamate. Its function is as follows. Aminotransferase that catalyzes the conversion of aromatic amino acids and 2-oxoglutarate into corresponding aromatic oxo acids and L-glutamate. The chain is Aromatic amino acid aminotransferase from Mycobacterium sp. (strain JLS).